The chain runs to 405 residues: Serpin B12 (405 aa).

Residues 64–83 are disordered; it reads SQNESKEPDPCLKSNKQKAG.

The protein belongs to the serpin family. Ov-serpin subfamily. Interacts with SLFN12; as part of a pathway regulating cell differentiation. May interact with USP14. As to expression, expressed in many tissues, including brain, bone marrow, lymph node, heart, lung, liver, pancreas, testis, ovary, and intestine.

Its subcellular location is the cytoplasm. In terms of biological role, inhibits trypsin and plasmin, but not thrombin, coagulation factor Xa, or urokinase-type plasminogen activator. May play a role in cell differentiation. In Homo sapiens (Human), this protein is Serpin B12 (SERPINB12).